The primary structure comprises 71 residues: Long neurotoxin 1 (71 aa).

5 disulfide bridges follow: Cys-3–Cys-21, Cys-14–Cys-42, Cys-27–Cys-31, Cys-46–Cys-57, and Cys-58–Cys-63.

This sequence belongs to the three-finger toxin family. Long-chain subfamily. Type II alpha-neurotoxin sub-subfamily. As to expression, expressed by the venom gland.

It is found in the secreted. Its function is as follows. Binds with high affinity to muscular (alpha-1/CHRNA1) and neuronal (alpha-7/CHRNA7) nicotinic acetylcholine receptor (nAChR) and inhibits acetylcholine from binding to the receptor, thereby impairing neuromuscular and neuronal transmission. The chain is Long neurotoxin 1 from Naja melanoleuca (Forest cobra).